The primary structure comprises 433 residues: Anthranilate synthase component 1 (433 aa).

L-tryptophan contacts are provided by residues serine 29 and 219-221 (PYT). 253 to 254 (GT) contributes to the chorismate binding site. Glutamate 280 contributes to the Mg(2+) binding site. Chorismate is bound by residues tyrosine 368, arginine 388, 402-404 (GAG), and glycine 404. Glutamate 417 is a binding site for Mg(2+).

It belongs to the anthranilate synthase component I family. Heterotetramer consisting of two non-identical subunits: a beta subunit (TrpG) and a large alpha subunit (TrpE). Mg(2+) serves as cofactor.

It carries out the reaction chorismate + L-glutamine = anthranilate + pyruvate + L-glutamate + H(+). The protein operates within amino-acid biosynthesis; L-tryptophan biosynthesis; L-tryptophan from chorismate: step 1/5. Its activity is regulated as follows. Feedback inhibited by tryptophan. Functionally, part of a heterotetrameric complex that catalyzes the two-step biosynthesis of anthranilate, an intermediate in the biosynthesis of L-tryptophan. In the first step, the glutamine-binding beta subunit (TrpG) of anthranilate synthase (AS) provides the glutamine amidotransferase activity which generates ammonia as a substrate that, along with chorismate, is used in the second step, catalyzed by the large alpha subunit of AS (TrpE) to produce anthranilate. In the absence of TrpG, TrpE can synthesize anthranilate directly from chorismate and high concentrations of ammonia. The sequence is that of Anthranilate synthase component 1 (trpE) from Thermococcus kodakarensis (strain ATCC BAA-918 / JCM 12380 / KOD1) (Pyrococcus kodakaraensis (strain KOD1)).